Reading from the N-terminus, the 549-residue chain is uncharacterized protein (549 aa).

The next 12 membrane-spanning stretches (helical) occupy residues 1–21 (MEIF…GVVT), 28–48 (IPLP…TFGL), 50–70 (VEFD…FADG), 85–105 (IFGL…FLIY), 106–126 (WVVP…LSPT), 165–185 (FAVA…TVEF), 187–207 (KVAI…GRSL), 222–242 (IVLL…IGVS), 278–298 (LEFV…PGIL), 310–330 (NVEI…LMLV), 361–381 (ILIA…VLSI), and 398–418 (VFLA…MLPI).

Belongs to the monovalent cation:proton antiporter 1 (CPA1) transporter (TC 2.A.36) family.

The protein resides in the cell inner membrane. This is an uncharacterized protein from Escherichia coli (strain K12).